The following is a 257-amino-acid chain: 5'-nucleotidase SurE (257 aa).

A divalent metal cation-binding residues include Asp-15, Asp-16, Ser-46, and Asn-99.

The protein belongs to the SurE nucleotidase family. A divalent metal cation serves as cofactor.

It is found in the cytoplasm. The catalysed reaction is a ribonucleoside 5'-phosphate + H2O = a ribonucleoside + phosphate. In terms of biological role, nucleotidase that shows phosphatase activity on nucleoside 5'-monophosphates. This chain is 5'-nucleotidase SurE, found in Aliivibrio fischeri (strain ATCC 700601 / ES114) (Vibrio fischeri).